The primary structure comprises 426 residues: Serine--tRNA ligase (426 aa).

233–235 (TAE) lines the L-serine pocket. 264–266 (RSE) is a binding site for ATP. Glu287 serves as a coordination point for L-serine. Residue 351–354 (EISS) participates in ATP binding. Ser387 is a binding site for L-serine.

This sequence belongs to the class-II aminoacyl-tRNA synthetase family. Type-1 seryl-tRNA synthetase subfamily. Homodimer. The tRNA molecule binds across the dimer.

It is found in the cytoplasm. It carries out the reaction tRNA(Ser) + L-serine + ATP = L-seryl-tRNA(Ser) + AMP + diphosphate + H(+). The catalysed reaction is tRNA(Sec) + L-serine + ATP = L-seryl-tRNA(Sec) + AMP + diphosphate + H(+). It functions in the pathway aminoacyl-tRNA biosynthesis; selenocysteinyl-tRNA(Sec) biosynthesis; L-seryl-tRNA(Sec) from L-serine and tRNA(Sec): step 1/1. Catalyzes the attachment of serine to tRNA(Ser). Is also able to aminoacylate tRNA(Sec) with serine, to form the misacylated tRNA L-seryl-tRNA(Sec), which will be further converted into selenocysteinyl-tRNA(Sec). The chain is Serine--tRNA ligase from Pseudomonas aeruginosa (strain LESB58).